The chain runs to 519 residues: Cytochrome P450 monooxygenase apdE (519 aa).

The helical transmembrane segment at 27 to 47 (FVFFAFVVYSCFTIAVGWVVY) threads the bilayer. Residues asparagine 327 and asparagine 379 are each glycosylated (N-linked (GlcNAc...) asparagine). Cysteine 466 contributes to the heme binding site. A glycan (N-linked (GlcNAc...) asparagine) is linked at asparagine 508.

This sequence belongs to the cytochrome P450 family. Requires heme as cofactor.

Its subcellular location is the membrane. It functions in the pathway secondary metabolite biosynthesis. Functionally, cytochrome P450 monooxygenase; part of the gene cluster that mediates the biosynthesis of aspyridones. The polyketide-amino acid backbone preaspyridone A is first assembled by the PKS-NRPS hybrid apdA. The assembly of preaspyridone A is initiated by loading of malonyl-CoA onto apdA, followed by decarboxylation to yield the acetyl starter unit. The growing polyketide chain then elongates into a tetraketide. The adpA PKS module catalyzes three Claisen condensations, as well as beta-keto processing and methylation. Alpha-methylation step during polyketide synthesis is a prerequisite and a key checkpoint for chain transfer between PKS and NRPS modules. The downstream NRPS module contains the condensation (C), adenylation (A), and thiolation (T) domains and catalyzes the incorporation of tyrosine via the formation of the L-tyrosinyl-thioester and the amide linkage between L-tyrosinyl-thioester and the tetraketide. The bimodular assembly line is terminated with a reductase (R) domain that facilitates formation and release of the tetramic acid product. Because apdA lacks a designated enoylreductase (ER) domain, the required activity is provided the enoyl reductase apdC. ApdC appears to operate with different stereoselectivity in different PKS cycle. Combined with apdC, apdA is proposed to synthesize preaspyridone A via about 20 enzymatic steps. A number of oxidative steps performed successively by the cytochrome P450 monooxygenases apdE and apdB are required for the conversion of preaspyridone A to aspyridone A. The cytochrome P450 monooxygenase apdE is responsible for the oxidative dephenylation of preaspyridone A. Finally, the predicted FAD-dependent monooxygenase apdD and the acyl-CoA dehydrogenase apdG may be involved in the transformation of aspyridone A into aspyridone B. The protein is Cytochrome P450 monooxygenase apdE of Emericella nidulans (strain FGSC A4 / ATCC 38163 / CBS 112.46 / NRRL 194 / M139) (Aspergillus nidulans).